A 65-amino-acid chain; its full sequence is MPAASLESLLPPPPGKLPSPPLRPHGKFQRRRIARMPLPLQPLHTPPLFGLQYRAAQRNPSDRYL.

The interval 1 to 30 (MPAASLESLLPPPPGKLPSPPLRPHGKFQR) is disordered. Pro residues predominate over residues 10–23 (LPPPPGKLPSPPLR).

This is an uncharacterized protein from Homo sapiens (Human).